The chain runs to 147 residues: Myoglobin (147 aa).

In terms of domain architecture, Globin spans 2 to 141 (ADFDMVLKCW…IIADMEADYK (140 aa)). His-60 lines the nitrite pocket. His-60 is an O2 binding site. His-89 serves as a coordination point for heme b.

It belongs to the globin family. In terms of assembly, monomeric.

It localises to the cytoplasm. It is found in the sarcoplasm. It carries out the reaction Fe(III)-heme b-[protein] + nitric oxide + H2O = Fe(II)-heme b-[protein] + nitrite + 2 H(+). It catalyses the reaction H2O2 + AH2 = A + 2 H2O. Its function is as follows. Monomeric heme protein which primary function is to store oxygen and facilitate its diffusion within muscle tissues. Reversibly binds oxygen through a pentacoordinated heme iron and enables its timely and efficient release as needed during periods of heightened demand. Depending on the oxidative conditions of tissues and cells, and in addition to its ability to bind oxygen, it also has a nitrite reductase activity whereby it regulates the production of bioactive nitric oxide. Under stress conditions, like hypoxia and anoxia, it also protects cells against reactive oxygen species thanks to its pseudoperoxidase activity. The sequence is that of Myoglobin (mb) from Pseudochaenichthys georgianus (South Georgia icefish).